The primary structure comprises 657 residues: Probable cytochrome P450 556A1 (657 aa).

A helical transmembrane segment spans residues 2 to 24; that stretch reads FLTSILYTIIIILIFYKGLEYLI. The disordered stretch occupies residues 440 to 486; the sequence is RSLPSINNNNNNNNNNNNNNNNNNNNNNNNNSNNNSINGNNKNNNRN. Residues 446-486 show a composition bias toward low complexity; the sequence is NNNNNNNNNNNNNNNNNNNNNNNNNSNNNSINGNNKNNNRN. Cys587 contributes to the heme binding site.

Belongs to the cytochrome P450 family. Heme serves as cofactor.

The protein resides in the membrane. This Dictyostelium discoideum (Social amoeba) protein is Probable cytochrome P450 556A1 (cyp556A1).